We begin with the raw amino-acid sequence, 264 residues long: Thymidylate synthase (264 aa).

Arginine 21 contributes to the dUMP binding site. Histidine 51 contacts (6R)-5,10-methylene-5,6,7,8-tetrahydrofolate. DUMP is bound at residue 126–127 (RR). The Nucleophile role is filled by cysteine 146. Residues 166-169 (RSAD), asparagine 177, and 207-209 (HLY) each bind dUMP. Aspartate 169 lines the (6R)-5,10-methylene-5,6,7,8-tetrahydrofolate pocket. Alanine 263 provides a ligand contact to (6R)-5,10-methylene-5,6,7,8-tetrahydrofolate.

It belongs to the thymidylate synthase family. Bacterial-type ThyA subfamily. In terms of assembly, homodimer.

The protein resides in the cytoplasm. The catalysed reaction is dUMP + (6R)-5,10-methylene-5,6,7,8-tetrahydrofolate = 7,8-dihydrofolate + dTMP. Its pathway is pyrimidine metabolism; dTTP biosynthesis. Catalyzes the reductive methylation of 2'-deoxyuridine-5'-monophosphate (dUMP) to 2'-deoxythymidine-5'-monophosphate (dTMP) while utilizing 5,10-methylenetetrahydrofolate (mTHF) as the methyl donor and reductant in the reaction, yielding dihydrofolate (DHF) as a by-product. This enzymatic reaction provides an intracellular de novo source of dTMP, an essential precursor for DNA biosynthesis. The protein is Thymidylate synthase of Hahella chejuensis (strain KCTC 2396).